Reading from the N-terminus, the 610-residue chain is Synaptotagmin-like protein 3 (610 aa).

Positions Glu-4–Glu-123 constitute a RabBD domain. The segment at Arg-219–Thr-239 is disordered. C2 domains follow at residues Val-306–Phe-428 and Arg-462–Thr-603.

In terms of assembly, monomer. Binds NRXN1. Binds RAB27A that has been activated by GTP-binding via its N-terminus.

The protein localises to the endomembrane system. Its function is as follows. May act as Rab effector protein and play a role in vesicle trafficking. Binds phospholipids in the presence of calcium ions. This is Synaptotagmin-like protein 3 (SYTL3) from Homo sapiens (Human).